A 266-amino-acid chain; its full sequence is Small ribosomal subunit protein mS42 (266 aa).

This sequence belongs to the mitochondrion-specific ribosomal protein mS42 family. Component of the mitochondrial small ribosomal subunit (mt-SSU). Mature yeast 74S mitochondrial ribosomes consist of a small (37S) and a large (54S) subunit. The 37S small subunit contains a 15S ribosomal RNA (15S mt-rRNA) and 34 different proteins. The 54S large subunit contains a 21S rRNA (21S mt-rRNA) and 46 different proteins. mS42 forms a heterodimer with mS43, building a large protuberance adjacent to the mRNA channel exit in the mt-SSU body.

It is found in the mitochondrion. Component of the mitochondrial ribosome (mitoribosome), a dedicated translation machinery responsible for the synthesis of mitochondrial genome-encoded proteins, including at least some of the essential transmembrane subunits of the mitochondrial respiratory chain. The mitoribosomes are attached to the mitochondrial inner membrane and translation products are cotranslationally integrated into the membrane. In Saccharomyces cerevisiae (strain ATCC 204508 / S288c) (Baker's yeast), this protein is Small ribosomal subunit protein mS42 (RSM26).